Consider the following 467-residue polypeptide: MLIHQRTLQNEISLTGIGLHTGHECTITFKPAPVNTGYIFVRTDINDCPEIPALIDHVVDVLRGTTIGIGDVKVHTTEHVLAALYGLQIDNCRIELSGPEPPVLDGSSNPFAEALLSAGIAEQDEPKNYLVIDETIEFHNPEKSVDIVALPLDGFRMTVMVDYKNPALGSQHSGLFDLDKEFLREFSPCRTFCFLSEVEAMANQGIIKGADIDNAIVIVDKQLDETEVQTLADKVGVDASHLVLGQNGILNNRELRFSNEPARHKLLDLLGDLALLGMPVKAQILAXRPGHASNVEFVKQLKKYADRNKLARQYQHEKKAGVIFDINAIQNILPHRYPFLLIDKIVEFKLDEKIVSIKNVTMNEPFFQGHFPGNPIMPGVLIIEAMAQTGGIMMLNGKENIKESVVFFMGIDKARFRKPVLPGDTLVIEAVMTNMRRTVCQFDAKAYVRGELVCEASLMATVMEKKN.

Residues 1–306 (MLIHQRTLQN…FVKQLKKYAD (306 aa)) form a UDP-3-O-acyl-N-acetylglucosamine deacetylase region. Residues H79, H264, and D268 each contribute to the Zn(2+) site. The active-site Proton donor is the H291. The 3-hydroxyacyl-[acyl-carrier-protein] dehydratase stretch occupies residues 307-467 (RNKLARQYQH…LMATVMEKKN (161 aa)). H370 is a catalytic residue.

It in the N-terminal section; belongs to the LpxC family. This sequence in the C-terminal section; belongs to the thioester dehydratase family. It depends on Zn(2+) as a cofactor.

It localises to the cytoplasm. The catalysed reaction is a UDP-3-O-[(3R)-3-hydroxyacyl]-N-acetyl-alpha-D-glucosamine + H2O = a UDP-3-O-[(3R)-3-hydroxyacyl]-alpha-D-glucosamine + acetate. It catalyses the reaction a (3R)-hydroxyacyl-[ACP] = a (2E)-enoyl-[ACP] + H2O. It participates in glycolipid biosynthesis; lipid IV(A) biosynthesis; lipid IV(A) from (3R)-3-hydroxytetradecanoyl-[acyl-carrier-protein] and UDP-N-acetyl-alpha-D-glucosamine: step 2/6. In terms of biological role, catalyzes the hydrolysis of UDP-3-O-myristoyl-N-acetylglucosamine to form UDP-3-O-myristoylglucosamine and acetate, the committed step in lipid A biosynthesis. Involved in unsaturated fatty acids biosynthesis. Catalyzes the dehydration of short chain beta-hydroxyacyl-ACPs and long chain saturated and unsaturated beta-hydroxyacyl-ACPs. In Chlorobaculum tepidum (strain ATCC 49652 / DSM 12025 / NBRC 103806 / TLS) (Chlorobium tepidum), this protein is Bifunctional enzyme LpxC/FabZ (lpxC/fabZ).